The primary structure comprises 296 residues: Acetylglutamate kinase (296 aa).

Residues 69 to 70, R91, and N193 each bind substrate; that span reads GG.

This sequence belongs to the acetylglutamate kinase family. ArgB subfamily.

Its subcellular location is the cytoplasm. It catalyses the reaction N-acetyl-L-glutamate + ATP = N-acetyl-L-glutamyl 5-phosphate + ADP. The protein operates within amino-acid biosynthesis; L-arginine biosynthesis; N(2)-acetyl-L-ornithine from L-glutamate: step 2/4. Its function is as follows. Catalyzes the ATP-dependent phosphorylation of N-acetyl-L-glutamate. This chain is Acetylglutamate kinase, found in Paracidovorax citrulli (strain AAC00-1) (Acidovorax citrulli).